The chain runs to 1207 residues: RNA-binding protein 20 (1207 aa).

Residues 1-58 form a disordered region; the sequence is MVLAAAMSQDADPSGPEQPDRDACIVPGVQGPPAPQGQQGMQPLPPPLPPPPQPQSSL. Pro residues predominate over residues 43–54; sequence PLPPPLPPPPQP. The U1-type zinc finger occupies 412 to 446; the sequence is HLPHICSICDKKVFDLKDWELHVKGKLHAQKCLLF. The 76-residue stretch at 521-596 folds into the RRM domain; the sequence is RVVHICNLPE…EKLLIRMSTR (76 aa). Over residues 625–637 the composition is skewed to basic and acidic residues; sequence LREADRYGPERPR. Disordered stretches follow at residues 625 to 686, 722 to 896, and 951 to 1110; these read LREA…NGED, EKYL…MEEL, and QGET…AELK. Residues 631 to 650 are RS; it reads YGPERPRSRSPMSRSLSPRS. Phosphoserine occurs at positions 638, 640, 643, 645, and 652. Positions 639 to 650 are enriched in low complexity; that stretch reads RSPMSRSLSPRS. A compositionally biased stretch (basic and acidic residues) spans 668-686; the sequence is YAWRDEDRETVPRRENGED. Phosphoserine is present on Ser729. Composition is skewed to basic and acidic residues over residues 740–759, 772–789, and 796–836; these read KGRE…DKHP, RKEE…PEDS, and EPKV…RGAE. At Ser789 the chain carries Phosphoserine. A compositionally biased stretch (acidic residues) spans 839 to 848; that stretch reads AGTEEQEGME. Phosphoserine occurs at positions 853 and 864. Positions 853–863 are enriched in polar residues; the sequence is SVGTQQEGTES. The span at 867-876 shows a compositional bias: basic and acidic residues; that stretch reads ENTRTKKGQD. 3 positions are modified to phosphoserine: Ser879, Ser881, and Ser963. Over residues 970–979 the composition is skewed to polar residues; it reads VPSTSTSCPN. Ser999 is modified (phosphoserine). The span at 1011–1022 shows a compositional bias: basic and acidic residues; the sequence is YEKEARGAEGSD. Phosphoserine is present on residues Ser1034, Ser1046, Ser1057, Ser1066, Ser1078, Ser1096, and Ser1101. Residues 1050-1072 show a composition bias toward basic and acidic residues; it reads DDCKARGSPEDGPHEVSPLEEKA. The segment covering 1073-1102 has biased composition (polar residues); it reads SPTTESDLQSQACQENSRYTETRSLNSRSP. Residues 1141 to 1172 form a Matrin-type zinc finger; sequence FYCKLCGLFYTSEEAAKVSHCRSTVHYRNLQK. A disordered region spans residues 1181–1207; that stretch reads GLKETEGVDSPSPERSGIGPHLERKKL. Phosphoserine occurs at positions 1190 and 1192.

As to quaternary structure, associates with components of the U1 and U2 U1 small nuclear ribonucleoprotein complexes. Phosphorylation regulates the subcellular localization. Phosphorylation of Ser-638 and Ser-640 in the RS (arginine/serine-rich) region promotes nuclear localization of the protein. In contrast, phosphorylation of the C-terminal disordered region promotes localization to cytoplasmic ribonucleoprotein granules.

The protein localises to the nucleus. It localises to the cytoplasm. Its subcellular location is the cytoplasmic ribonucleoprotein granule. RNA-binding protein that acts as a regulator of mRNA splicing of a subset of genes encoding key structural proteins involved in cardiac development, such as TTN (Titin), CACNA1C, CAMK2D or PDLIM5/ENH. Acts as a repressor of mRNA splicing: specifically binds the 5'UCUU-3' motif that is predominantly found within intronic sequences of pre-mRNAs, leading to the exclusion of specific exons in target transcripts. RBM20-mediated exon skipping is hormone-dependent and is essential for TTN isoform transition in both cardiac and skeletal muscles. RBM20-mediated exon skipping of TTN provides substrates for the formation of circular RNA (circRNAs) from the TTN transcripts. Together with RBM24, promotes the expression of short isoforms of PDLIM5/ENH in cardiomyocytes. In Rattus norvegicus (Rat), this protein is RNA-binding protein 20.